The following is a 462-amino-acid chain: ATP synthase subunit beta (462 aa).

150–157 (GGAGVGKT) is an ATP binding site.

The protein belongs to the ATPase alpha/beta chains family. As to quaternary structure, F-type ATPases have 2 components, CF(1) - the catalytic core - and CF(0) - the membrane proton channel. CF(1) has five subunits: alpha(3), beta(3), gamma(1), delta(1), epsilon(1). CF(0) has three main subunits: a(1), b(2) and c(9-12). The alpha and beta chains form an alternating ring which encloses part of the gamma chain. CF(1) is attached to CF(0) by a central stalk formed by the gamma and epsilon chains, while a peripheral stalk is formed by the delta and b chains.

The protein resides in the cell membrane. It carries out the reaction ATP + H2O + 4 H(+)(in) = ADP + phosphate + 5 H(+)(out). Functionally, produces ATP from ADP in the presence of a proton gradient across the membrane. The catalytic sites are hosted primarily by the beta subunits. This chain is ATP synthase subunit beta, found in Wigglesworthia glossinidia brevipalpis.